The following is an 81-amino-acid chain: Beta-defensin 34 (81 aa).

Residues 1-20 (MKTFLFLFAVLFFWSQPRMH) form the signal peptide. Disulfide bonds link cysteine 28–cysteine 55, cysteine 35–cysteine 49, and cysteine 39–cysteine 56. A compositionally biased stretch (polar residues) spans 62-72 (CGRSKGNQSDE). Residues 62–81 (CGRSKGNQSDEGSGHMGTRG) are disordered.

This sequence belongs to the beta-defensin family. In terms of tissue distribution, only expressed in epididymis (caput, corpus and cauda).

Its subcellular location is the secreted. In terms of biological role, has antibacterial activity. This Mus musculus (Mouse) protein is Beta-defensin 34 (Defb34).